Consider the following 410-residue polypeptide: MARAKFERSKPHINIGTIGHVDHGKTTLTAAISAVLASIDNTVKLKKFDEIDAAPEEKARGITINTSHVEYQTPLRHYAHVDCPGHADYVKNMITGAAQMDGAILVVSAADGPMPQTREHILLAKQVGVPSIVVFLNKADMIDDEELLELVELEVRELLSKYDFPGEEVPFVAGSALLALEACLKNPTIGKGKDKWVDKIFELMDMVDKYFPTPERDIDKTFLMAVEDVFSITGRGTVATGRIERGAIKVGETVEIVGLKSTASTTVTGLEMFQKTLDEGLAGDNVGVLLRGVQKQDIERGMVLAKPGSITPHDKFEAEVYVLNKEEGGRHTPFFPGYRPQFYVRTTDVTGNISQFTTDDGGSAEMVLPGDRIKMTVELIHPVAIEQGMRFAIREGGRTVGAGIVSKILD.

The tr-type G domain maps to Lys10 to Glu215. The G1 stretch occupies residues Gly19–Thr26. Gly19–Thr26 serves as a coordination point for GTP. Mg(2+) is bound at residue Thr26. Residues Gly61–Asn65 form a G2 region. The interval Asp82 to Gly85 is G3. Residues Asp82–His86 and Asn137–Asp140 contribute to the GTP site. The interval Asn137 to Asp140 is G4. The G5 stretch occupies residues Ser175–Leu177.

This sequence belongs to the TRAFAC class translation factor GTPase superfamily. Classic translation factor GTPase family. EF-Tu/EF-1A subfamily.

The protein resides in the plastid. Its subcellular location is the chloroplast. The enzyme catalyses GTP + H2O = GDP + phosphate + H(+). Functionally, GTP hydrolase that promotes the GTP-dependent binding of aminoacyl-tRNA to the A-site of ribosomes during protein biosynthesis. The protein is Elongation factor Tu, chloroplastic (tufA) of Cyanidium caldarium (Red alga).